The chain runs to 304 residues: Oxygen-dependent coproporphyrinogen-III oxidase (304 aa).

Ser-93 lines the substrate pocket. A divalent metal cation-binding residues include His-97 and His-107. The Proton donor role is filled by His-107. 109-111 (NVR) serves as a coordination point for substrate. A divalent metal cation-binding residues include His-146 and His-176. The segment at 241 to 276 (YVEFNLVYDRGTLFGLQSGGRTESILMSLPPQVRWA) is important for dimerization. Substrate is bound at residue 259–261 (GGR).

It belongs to the aerobic coproporphyrinogen-III oxidase family. Homodimer. Requires a divalent metal cation as cofactor.

Its subcellular location is the cytoplasm. It catalyses the reaction coproporphyrinogen III + O2 + 2 H(+) = protoporphyrinogen IX + 2 CO2 + 2 H2O. It participates in porphyrin-containing compound metabolism; protoporphyrin-IX biosynthesis; protoporphyrinogen-IX from coproporphyrinogen-III (O2 route): step 1/1. In terms of biological role, involved in the heme biosynthesis. Catalyzes the aerobic oxidative decarboxylation of propionate groups of rings A and B of coproporphyrinogen-III to yield the vinyl groups in protoporphyrinogen-IX. The polypeptide is Oxygen-dependent coproporphyrinogen-III oxidase (Pseudomonas fluorescens (strain Pf0-1)).